Reading from the N-terminus, the 364-residue chain is Uroporphyrinogen decarboxylase (364 aa).

Positions 34, 36, 38, 47, 83, 161, 216, and 336 each coordinate coproporphyrinogen I. Arg-34, Ala-36, and Arg-38 together coordinate coproporphyrinogen III. Residues Asp-83, Tyr-161, Ser-216, and His-336 each coordinate coproporphyrinogen III.

This sequence belongs to the uroporphyrinogen decarboxylase family. In terms of assembly, homodimer.

Its subcellular location is the cytoplasm. It is found in the cytosol. It carries out the reaction uroporphyrinogen III + 4 H(+) = coproporphyrinogen III + 4 CO2. It catalyses the reaction uroporphyrinogen I + 4 H(+) = coproporphyrinogen I + 4 CO2. Its pathway is porphyrin-containing compound metabolism; protoporphyrin-IX biosynthesis; coproporphyrinogen-III from 5-aminolevulinate: step 4/4. Functionally, catalyzes the sequential decarboxylation of the four acetate side chains of uroporphyrinogen to form coproporphyrinogen and participates in the fifth step in the heme biosynthetic pathway. Isomer I or isomer III of uroporphyrinogen may serve as substrate, but only coproporphyrinogen III can ultimately be converted to heme. In vitro also decarboxylates pentacarboxylate porphyrinogen I. This Rattus norvegicus (Rat) protein is Uroporphyrinogen decarboxylase.